The following is a 245-amino-acid chain: Adenosylcobinamide-GDP ribazoletransferase (245 aa).

A run of 6 helical transmembrane segments spans residues tryptophan 35–leucine 55, isoleucine 108–histidine 128, glycine 137–valine 157, isoleucine 176–methionine 196, threonine 197–arginine 217, and isoleucine 222–alanine 242.

This sequence belongs to the CobS family. Requires Mg(2+) as cofactor.

It localises to the cell inner membrane. The catalysed reaction is alpha-ribazole + adenosylcob(III)inamide-GDP = adenosylcob(III)alamin + GMP + H(+). The enzyme catalyses alpha-ribazole 5'-phosphate + adenosylcob(III)inamide-GDP = adenosylcob(III)alamin 5'-phosphate + GMP + H(+). The protein operates within cofactor biosynthesis; adenosylcobalamin biosynthesis; adenosylcobalamin from cob(II)yrinate a,c-diamide: step 7/7. In terms of biological role, joins adenosylcobinamide-GDP and alpha-ribazole to generate adenosylcobalamin (Ado-cobalamin). Also synthesizes adenosylcobalamin 5'-phosphate from adenosylcobinamide-GDP and alpha-ribazole 5'-phosphate. The protein is Adenosylcobinamide-GDP ribazoletransferase of Nitratidesulfovibrio vulgaris (strain DP4) (Desulfovibrio vulgaris).